A 143-amino-acid chain; its full sequence is Large ribosomal subunit protein uL11 (143 aa).

The protein belongs to the universal ribosomal protein uL11 family. As to quaternary structure, part of the ribosomal stalk of the 50S ribosomal subunit. Interacts with L10 and the large rRNA to form the base of the stalk. L10 forms an elongated spine to which L12 dimers bind in a sequential fashion forming a multimeric L10(L12)X complex. In terms of processing, one or more lysine residues are methylated.

In terms of biological role, forms part of the ribosomal stalk which helps the ribosome interact with GTP-bound translation factors. The protein is Large ribosomal subunit protein uL11 of Ralstonia pickettii (strain 12J).